A 288-amino-acid chain; its full sequence is Fructokinase (288 aa).

Thr-131 lines the ATP pocket. The Zn(2+) site is built by His-154, Cys-169, His-172, and Cys-175. ATP contacts are provided by residues Pro-183 and 231–235; that span reads GVMNQ.

It belongs to the ROK (NagC/XylR) family. The cofactor is Mg(2+).

The catalysed reaction is D-fructose + ATP = D-fructose 6-phosphate + ADP + H(+). Inhibition by zinc ions. The protein is Fructokinase (scrK) of Pediococcus pentosaceus.